The chain runs to 944 residues: 2-oxoglutarate dehydrogenase E1 component (944 aa).

The tract at residues 915–944 (RRRSSPAEGDPTVHKKEQERIVSDSLTRKN) is disordered. Residues 925-936 (PTVHKKEQERIV) show a composition bias toward basic and acidic residues.

It belongs to the alpha-ketoglutarate dehydrogenase family. As to quaternary structure, homodimer. Part of the 2-oxoglutarate dehydrogenase (OGDH) complex composed of E1 (2-oxoglutarate dehydrogenase), E2 (dihydrolipoamide succinyltransferase) and E3 (dihydrolipoamide dehydrogenase); the complex contains multiple copies of the three enzymatic components (E1, E2 and E3). Thiamine diphosphate is required as a cofactor.

The catalysed reaction is N(6)-[(R)-lipoyl]-L-lysyl-[protein] + 2-oxoglutarate + H(+) = N(6)-[(R)-S(8)-succinyldihydrolipoyl]-L-lysyl-[protein] + CO2. Functionally, E1 component of the 2-oxoglutarate dehydrogenase (OGDH) complex which catalyzes the decarboxylation of 2-oxoglutarate, the first step in the conversion of 2-oxoglutarate to succinyl-CoA and CO(2). This Bacillus velezensis (strain DSM 23117 / BGSC 10A6 / LMG 26770 / FZB42) (Bacillus amyloliquefaciens subsp. plantarum) protein is 2-oxoglutarate dehydrogenase E1 component.